We begin with the raw amino-acid sequence, 200 residues long: Coiled-coil domain-containing protein 28B (200 aa).

Methionine 1 is subject to N-acetylmethionine. The segment covering 1–10 has biased composition (basic residues); sequence MDDKKKKRSP. Residues 1–49 form a disordered region; that stretch reads MDDKKKKRSPKPCLAQPAQAPGTLRRVPVPTSHSGSLALGLPHLPSPKQ. A phosphoserine mark is found at serine 46 and serine 115. Acidic residues predominate over residues 141–152; sequence EEEDDEEEEDGV. The disordered stretch occupies residues 141–164; it reads EEEDDEEEEDGVTEGLPEEQKKTM. Residues 158–183 adopt a coiled-coil conformation; that stretch reads EEQKKTMADRNLDQLLSNLEDLSNSI.

In terms of assembly, interacts with BBS1, BBS2, BBS4, BBS5, BBS6, BBS7 and TTC8/BBS8. Interacts with MAPKAP1/SIN1 isoform 1 and RICTOR.

Its subcellular location is the cytoplasm. It is found in the cytoskeleton. It localises to the microtubule organizing center. The protein resides in the centrosome. Involved in ciliogenesis. Regulates cilia length through its interaction with MAPKAP1/SIN1 but independently of mTORC2 complex. Modulates mTORC2 complex assembly and function, possibly enhances AKT1 phosphorylation. Does not seem to modulate assembly and function of mTORC1 complex. The protein is Coiled-coil domain-containing protein 28B (CCDC28B) of Homo sapiens (Human).